The primary structure comprises 193 residues: uncharacterized protein (193 aa).

A helical transmembrane segment spans residues 119–143 (LAGSLLAATGMTLGIFGMGITGTCW).

It is found in the mitochondrion membrane. This is an uncharacterized protein from Saccharomyces cerevisiae (strain ATCC 204508 / S288c) (Baker's yeast).